Consider the following 289-residue polypeptide: Polyamine aminopropyltransferase (289 aa).

The PABS domain occupies 5–238 (TVWHETLHDQ…GIMTFAWATD (234 aa)). Gln33 provides a ligand contact to S-methyl-5'-thioadenosine. Residues His64 and Asp88 each contribute to the spermidine site. Residues Glu108 and 140 to 141 (DG) each bind S-methyl-5'-thioadenosine. Residue Asp158 is the Proton acceptor of the active site. Residue 158-161 (DCTD) participates in spermidine binding. Pro165 contributes to the S-methyl-5'-thioadenosine binding site.

This sequence belongs to the spermidine/spermine synthase family. Homodimer or homotetramer.

Its subcellular location is the cytoplasm. The catalysed reaction is S-adenosyl 3-(methylsulfanyl)propylamine + putrescine = S-methyl-5'-thioadenosine + spermidine + H(+). It functions in the pathway amine and polyamine biosynthesis; spermidine biosynthesis; spermidine from putrescine: step 1/1. Its function is as follows. Catalyzes the irreversible transfer of a propylamine group from the amino donor S-adenosylmethioninamine (decarboxy-AdoMet) to putrescine (1,4-diaminobutane) to yield spermidine. The protein is Polyamine aminopropyltransferase of Enterobacter sp. (strain 638).